A 172-amino-acid chain; its full sequence is Myosin regulatory light polypeptide 9 (172 aa).

Residues 1–16 (MSSKRAKAKTTKKRPQ) are compositionally biased toward basic residues. The disordered stretch occupies residues 1-20 (MSSKRAKAKTTKKRPQRATS). Position 2 is an N-acetylserine (serine 2). At threonine 19 the chain carries Phosphothreonine; by MLCK, CIT and ROCK2. Phosphoserine; by CDC42BP, CIT, MLCK, PAK1, ROCK1, ROCK2, DAPK1, DAPK2 and ZIPK/DAPK3 is present on serine 20. EF-hand domains lie at 29 to 64 (SQIQ…LGKN), 98 to 133 (DPED…MGDR), and 134 to 169 (FTDE…GAKD). Residues aspartate 42, asparagine 44, aspartate 46, and aspartate 53 each coordinate Ca(2+).

In terms of assembly, myosin is a hexamer of 2 heavy chains and 4 light chains: interacts with myosin heavy chain MYO19. Interacts with LUZP1; the interaction results in inhibition of phosphorylation of MYL9 by DAPK3. Post-translationally, phosphorylation increases the actin-activated myosin ATPase activity and thereby regulates the contractile activity. It is required to generate the driving force in the migration of the cells but not necessary for localization of myosin-2 at the leading edge. Phosphorylation is required for myotube formation. Phosphorylated by DAPK3; DAPK3-mediated phosphorylation is inhibited by LUZP1.

It is found in the cytoplasm. It localises to the cytoskeleton. The protein resides in the cell cortex. Myosin regulatory subunit that plays an important role in regulation of both smooth muscle and nonmuscle cell contractile activity via its phosphorylation. Implicated in cytokinesis, receptor capping, and cell locomotion. In myoblasts, regulates PIEZO1-dependent cortical actomyosin assembly involved in myotube formation. The chain is Myosin regulatory light polypeptide 9 (Myl9) from Mus musculus (Mouse).